The chain runs to 237 residues: U2 small nuclear ribonucleoprotein A' (237 aa).

LRR repeat units lie at residues 53–74, 75–95, and 97–118; these read RTNI…GHND, TVHT…SRLP, and YLVN…QGLR. An LRRCT domain is found at 132–170; the sequence is NVICHKEQYRETVIALCPQLAVLDGERVRQAERQAAPQN. Residues 161–182 form a disordered region; it reads QAERQAAPQNEKTDTPTEGPQP.

The protein belongs to the U2 small nuclear ribonucleoprotein A family. Associated with the spliceosome.

The protein resides in the nucleus. Involved in pre-mRNA splicing. This Eremothecium gossypii (strain ATCC 10895 / CBS 109.51 / FGSC 9923 / NRRL Y-1056) (Yeast) protein is U2 small nuclear ribonucleoprotein A' (LEA1).